Here is a 439-residue protein sequence, read N- to C-terminus: UDP-N-acetylmuramoylalanine--D-glutamate ligase (439 aa).

Position 116 to 122 (116 to 122 (GSNGKTT)) interacts with ATP.

This sequence belongs to the MurCDEF family.

The protein localises to the cytoplasm. The enzyme catalyses UDP-N-acetyl-alpha-D-muramoyl-L-alanine + D-glutamate + ATP = UDP-N-acetyl-alpha-D-muramoyl-L-alanyl-D-glutamate + ADP + phosphate + H(+). It functions in the pathway cell wall biogenesis; peptidoglycan biosynthesis. Functionally, cell wall formation. Catalyzes the addition of glutamate to the nucleotide precursor UDP-N-acetylmuramoyl-L-alanine (UMA). In Shewanella oneidensis (strain ATCC 700550 / JCM 31522 / CIP 106686 / LMG 19005 / NCIMB 14063 / MR-1), this protein is UDP-N-acetylmuramoylalanine--D-glutamate ligase.